Reading from the N-terminus, the 133-residue chain is Small ribosomal subunit protein uS11 (133 aa).

The tract at residues 1-23 (MPPKTRGAVRKPRKKDKKNIALG) is disordered. The segment covering 7–17 (GAVRKPRKKDK) has biased composition (basic residues).

Belongs to the universal ribosomal protein uS11 family. In terms of assembly, part of the 30S ribosomal subunit. Interacts with proteins S7 and S18. Binds to IF-3.

Located on the platform of the 30S subunit, it bridges several disparate RNA helices of the 16S rRNA. Forms part of the Shine-Dalgarno cleft in the 70S ribosome. The sequence is that of Small ribosomal subunit protein uS11 from Arthrobacter sp. (strain FB24).